The chain runs to 162 residues: Anaerobic nitrite reductase NSHB2 (162 aa).

Positions 16 to 159 (SFSEEQEALV…LVAAIKQEMK (144 aa)) constitute a Globin domain. The Homodimerization signature appears at 49–53 (EVAPS). S59, K73, H77, R100, T104, and H105 together coordinate heme b. A Homodimerization motif is present at residues 112–124 (DAHFEVTRFALLE).

It belongs to the plant globin family. In terms of assembly, homodimer. Requires heme b as cofactor. In terms of tissue distribution, mainly expressed in germinating seeds, seedlings, roots, flowers and leaves.

It localises to the cytoplasm. It is found in the nucleus. The enzyme catalyses Fe(III)-heme b-[protein] + nitric oxide + H2O = Fe(II)-heme b-[protein] + nitrite + 2 H(+). Functionally, phytoglobin that reduces nitrite to nitric oxide under anoxic conditions (e.g. during flooding or in waterlogged soil). May not function as an oxygen storage or transport protein. Has an unusually high affinity for O(2) through an hexacoordinate heme iron because of a very low dissociation constant. Promotes tolerance to low potassium K(+) conditions. The sequence is that of Anaerobic nitrite reductase NSHB2 from Oryza sativa subsp. indica (Rice).